Here is a 764-residue protein sequence, read N- to C-terminus: Ribosomal protein S6 kinase alpha-6 (764 aa).

A disordered region spans residues 1 to 24; sequence MLPFAPVEDPWDQEDMEVFGSTSS. A Protein kinase 1 domain is found at 93 to 350; the sequence is FDLLKVLGQG…VEEVKRHAFF (258 aa). ATP-binding positions include 99 to 107 and K125; that span reads LGQGSFGKV. D218 serves as the catalytic Proton acceptor. A phosphoserine mark is found at S252, S392, and S409. In terms of domain architecture, AGC-kinase C-terminal spans 351–420; that stretch reads ASIDWNKLYK…VATSIAEEYK (70 aa). The region spanning 446-706 is the Protein kinase 2 domain; it reads YELKEDIGIG…VLKHPWITQR (261 aa). Residues 452-460 and K475 each bind ATP; that span reads IGIGSYSVC. D563 serves as the catalytic Proton acceptor. A Phosphothreonine modification is found at T601.

Belongs to the protein kinase superfamily. AGC Ser/Thr protein kinase family. S6 kinase subfamily. As to quaternary structure, forms a complex with MAPK3/ERK1 but not with MAPK9 or MAPK14 in serum-starved cells. The cofactor is Mg(2+). Post-translationally, phosphorylated at Ser-252, Ser-392, and Ser-409 in serum-starved cells.

Its subcellular location is the cytoplasm. It localises to the cytosol. It is found in the nucleus. The enzyme catalyses L-seryl-[protein] + ATP = O-phospho-L-seryl-[protein] + ADP + H(+). It catalyses the reaction L-threonyl-[protein] + ATP = O-phospho-L-threonyl-[protein] + ADP + H(+). With respect to regulation, constitutively activated by phosphorylation at Ser-252, Ser-392, and Ser-409 in serum-starved cells. Does not require growth factor stimulation for significant kinase activity. Constitutively active serine/threonine-protein kinase that exhibits growth-factor-independent kinase activity and that may participate in p53/TP53-dependent cell growth arrest signaling and play an inhibitory role during embryogenesis. This is Ribosomal protein S6 kinase alpha-6 (Rps6ka6) from Mus musculus (Mouse).